A 187-amino-acid chain; its full sequence is Phosphatidylethanolamine-binding protein 1 (187 aa).

At serine 13 the chain carries Phosphoserine. Threonine 42 carries the post-translational modification Phosphothreonine. 3 positions are modified to phosphoserine: serine 52, serine 98, and serine 153. The tract at residues 93–134 (KGNDISSGTVLSDYVGSGPPKGTGLHRYVWLVYEQSGPLKCD) is interaction with RAF1.

This sequence belongs to the phosphatidylethanolamine-binding protein family. In terms of assembly, has a tendency to form dimers by disulfide cross-linking. Interacts with RAF1 and this interaction is enhanced if RAF1 is phosphorylated on residues 'Ser-338', 'Ser-339', 'Tyr-340' and 'Tyr-341'. Interacts with ALOX15; in response to IL13/interleukin-13, prevents the interaction of PEBP1 with RAF1 to activate the ERK signaling cascade.

The protein resides in the cytoplasm. Its function is as follows. Binds ATP, opioids and phosphatidylethanolamine. Has lower affinity for phosphatidylinositol and phosphatidylcholine. Serine protease inhibitor which inhibits thrombin, neuropsin and chymotrypsin but not trypsin, tissue type plasminogen activator and elastase. Involved in the positive regulation of epithelial cell migration. Inhibits the kinase activity of RAF1 by inhibiting its activation and by dissociating the RAF1/MEK complex and acting as a competitive inhibitor of MEK phosphorylation. In terms of biological role, HCNP may be involved in the function of the presynaptic cholinergic neurons of the central nervous system. HCNP increases the production of choline acetyltransferase but not acetylcholinesterase. Seems to be mediated by a specific receptor. The sequence is that of Phosphatidylethanolamine-binding protein 1 (PEBP1) from Canis lupus familiaris (Dog).